We begin with the raw amino-acid sequence, 219 residues long: Endo-type membrane-bound lytic murein transglycosylase A-like protein (219 aa).

The protein belongs to the transglycosylase Slt family.

It catalyses the reaction Endolytic cleavage of the (1-&gt;4)-beta-glycosidic linkage between N-acetylmuramic acid (MurNAc) and N-acetylglucosamine (GlcNAc) residues in peptidoglycan with concomitant formation of a 1,6-anhydrobond in the MurNAc residue.. Murein-degrading enzyme. May play a role in recycling of muropeptides during cell elongation and/or cell division (Potential). The polypeptide is Endo-type membrane-bound lytic murein transglycosylase A-like protein (Shigella flexneri).